Consider the following 236-residue polypeptide: Thiamine-phosphate synthase (236 aa).

Residues 57-61 and asparagine 89 each bind 4-amino-2-methyl-5-(diphosphooxymethyl)pyrimidine; that span reads QLRDK. Residues aspartate 90 and aspartate 109 each contribute to the Mg(2+) site. A 4-amino-2-methyl-5-(diphosphooxymethyl)pyrimidine-binding site is contributed by serine 128. 154 to 156 serves as a coordination point for 2-[(2R,5Z)-2-carboxy-4-methylthiazol-5(2H)-ylidene]ethyl phosphate; the sequence is TPS. Residue lysine 157 participates in 4-amino-2-methyl-5-(diphosphooxymethyl)pyrimidine binding. Residues glycine 185 and 205 to 206 contribute to the 2-[(2R,5Z)-2-carboxy-4-methylthiazol-5(2H)-ylidene]ethyl phosphate site; that span reads IS.

Belongs to the thiamine-phosphate synthase family. Requires Mg(2+) as cofactor.

It catalyses the reaction 2-[(2R,5Z)-2-carboxy-4-methylthiazol-5(2H)-ylidene]ethyl phosphate + 4-amino-2-methyl-5-(diphosphooxymethyl)pyrimidine + 2 H(+) = thiamine phosphate + CO2 + diphosphate. It carries out the reaction 2-(2-carboxy-4-methylthiazol-5-yl)ethyl phosphate + 4-amino-2-methyl-5-(diphosphooxymethyl)pyrimidine + 2 H(+) = thiamine phosphate + CO2 + diphosphate. The catalysed reaction is 4-methyl-5-(2-phosphooxyethyl)-thiazole + 4-amino-2-methyl-5-(diphosphooxymethyl)pyrimidine + H(+) = thiamine phosphate + diphosphate. Its pathway is cofactor biosynthesis; thiamine diphosphate biosynthesis; thiamine phosphate from 4-amino-2-methyl-5-diphosphomethylpyrimidine and 4-methyl-5-(2-phosphoethyl)-thiazole: step 1/1. Condenses 4-methyl-5-(beta-hydroxyethyl)thiazole monophosphate (THZ-P) and 2-methyl-4-amino-5-hydroxymethyl pyrimidine pyrophosphate (HMP-PP) to form thiamine monophosphate (TMP). In Roseiflexus sp. (strain RS-1), this protein is Thiamine-phosphate synthase.